A 233-amino-acid chain; its full sequence is uncharacterized protein (233 aa).

This is an uncharacterized protein from Methanocaldococcus jannaschii (strain ATCC 43067 / DSM 2661 / JAL-1 / JCM 10045 / NBRC 100440) (Methanococcus jannaschii).